Here is a 147-residue protein sequence, read N- to C-terminus: 3-dehydroquinate dehydratase (147 aa).

Y23 serves as the catalytic Proton acceptor. Substrate is bound by residues N75, H81, and D88. H101 acts as the Proton donor in catalysis. Residues L102–S103 and R112 contribute to the substrate site.

This sequence belongs to the type-II 3-dehydroquinase family. As to quaternary structure, homododecamer.

The catalysed reaction is 3-dehydroquinate = 3-dehydroshikimate + H2O. It participates in metabolic intermediate biosynthesis; chorismate biosynthesis; chorismate from D-erythrose 4-phosphate and phosphoenolpyruvate: step 3/7. Its function is as follows. Catalyzes a trans-dehydration via an enolate intermediate. This chain is 3-dehydroquinate dehydratase, found in Stutzerimonas stutzeri (strain A1501) (Pseudomonas stutzeri).